The following is an 872-amino-acid chain: FHIP family protein CBG19667 (872 aa).

The segment at 800-841 is disordered; the sequence is SRSSPRSADEHDSTLFYGRSTIPPPGRKPLLREPSHQETLDD. Basic and acidic residues predominate over residues 829–841; sequence LLREPSHQETLDD.

The protein belongs to the FHIP family.

The polypeptide is FHIP family protein CBG19667 (Caenorhabditis briggsae).